Reading from the N-terminus, the 322-residue chain is Phosphatidylglycerol--prolipoprotein diacylglyceryl transferase (322 aa).

4 helical membrane-spanning segments follow: residues Pro21–Leu41, Gly50–Gly70, Asn98–Phe118, and Ile123–Gly143. Arg144 is a binding site for a 1,2-diacyl-sn-glycero-3-phospho-(1'-sn-glycerol). The next 2 membrane-spanning stretches (helical) occupy residues Val191–Trp211 and Ile254–Gly274. Residues Val283–Lys322 form a disordered region.

The protein belongs to the Lgt family.

Its subcellular location is the cell membrane. The enzyme catalyses L-cysteinyl-[prolipoprotein] + a 1,2-diacyl-sn-glycero-3-phospho-(1'-sn-glycerol) = an S-1,2-diacyl-sn-glyceryl-L-cysteinyl-[prolipoprotein] + sn-glycerol 1-phosphate + H(+). It functions in the pathway protein modification; lipoprotein biosynthesis (diacylglyceryl transfer). Its function is as follows. Catalyzes the transfer of the diacylglyceryl group from phosphatidylglycerol to the sulfhydryl group of the N-terminal cysteine of a prolipoprotein, the first step in the formation of mature lipoproteins. This is Phosphatidylglycerol--prolipoprotein diacylglyceryl transferase from Corynebacterium efficiens (strain DSM 44549 / YS-314 / AJ 12310 / JCM 11189 / NBRC 100395).